The sequence spans 284 residues: 2-dehydro-3-deoxyphosphooctonate aldolase (284 aa).

The protein belongs to the KdsA family.

It is found in the cytoplasm. The catalysed reaction is D-arabinose 5-phosphate + phosphoenolpyruvate + H2O = 3-deoxy-alpha-D-manno-2-octulosonate-8-phosphate + phosphate. It functions in the pathway carbohydrate biosynthesis; 3-deoxy-D-manno-octulosonate biosynthesis; 3-deoxy-D-manno-octulosonate from D-ribulose 5-phosphate: step 2/3. Its pathway is bacterial outer membrane biogenesis; lipopolysaccharide biosynthesis. The protein is 2-dehydro-3-deoxyphosphooctonate aldolase of Burkholderia mallei (strain NCTC 10247).